Reading from the N-terminus, the 302-residue chain is Dioxygenase olcK (302 aa).

Positions 136, 138, and 213 each coordinate Fe cation.

This sequence belongs to the PhyH family. As to quaternary structure, homodimer. The cofactor is Fe cation.

Its subcellular location is the peroxisome matrix. It participates in secondary metabolite biosynthesis; terpenoid biosynthesis. Dioxygenase; part of the gene cluster that mediates the biosynthesis of 15-deoxyoxalicine B. The first step of the pathway is the synthesis of nicotinyl-CoA from nicotinic acid by the nicotinic acid-CoA ligase olcI. Nicotinyl-CoA is then a substrate of polyketide synthase olcA to produce 4-hydroxy-6-(3-pyridinyl)-2H-pyran-2-one (HPPO) which is further prenylated by the polyprenyl transferase olcH to yield geranylgeranyl-HPPO. Geranylgeranyl pyrophosphate is provided by the cluster-specific geranylgeranyl pyrophosphate synthase olcC. The FAD-dependent monooxygenase olcE catalyzes the epoxidation of geranylgeranyl-HPPO and the terpene cyclase olcD catalyzes the cyclization of the terpenoid component, resulting in the formation of the tricyclic terpene moiety seen in predecaturin E. The cytochrome P450 monooxygenase then catalyzes the allylic oxidation of predecaturin E, which is followed by spirocylization with concomitant loss of one molecule of water to form decaturin E. Decaturin E is the substrate of the cytochrome P450 monooxygenase olcJ which hydroxylates it at the C-29 position to form decaturin F. The short-chain dehydrogenase/reductase olcF may catalyze the oxidation of decaturin F to generate the 29-hydroxyl-27-one intermediate, and subsequent hemiacetal formation probably leads to the formation of decaturin C. The dioxygenase olcK may be a peroxisomal enzyme that catalyzes the hydroxylation of decaturin C into decaturin A once decaturin C is shuttled into the peroxisome by the MFS transporter olcL. Finally the cytochrome P450 monooxygenase olcB catalyzes the oxidative rearrangement to yield 15-deoxyoxalicine B. In the absence of olcJ, decaturin E may be shunted to a pathway in which it is oxidized to a ketone, possibly by olcF, to form decaturin D, which undergoes further allylic oxidation to yield decaturin G. Moreover, in the absence of oclK or oclL, oclB can convert decaturin C into 15-deoxyoxalicine A. In Penicillium canescens, this protein is Dioxygenase olcK.